The following is a 547-amino-acid chain: Serine beta-lactamase-like protein LACTB, mitochondrial (547 aa).

The transit peptide at 1–115 (MYRLMSAVTA…RAIESSRDLL (115 aa)) directs the protein to the mitochondrion. Positions 62 to 83 (GAAPAQSPAAPDPEASPLAEPP) are enriched in low complexity. A disordered region spans residues 62 to 96 (GAAPAQSPAAPDPEASPLAEPPQEQSLAPWSPQTP). The active-site Acyl-ester intermediate is Ser-164. Residues Lys-283 and Lys-284 each carry the N6-succinyllysine modification. N6-acetyllysine is present on residues Lys-297 and Lys-342.

Belongs to the peptidase S12 family. As to expression, expressed predominantly in skeletal muscle.

The protein resides in the mitochondrion. In terms of biological role, mitochondrial serine protease that acts as a regulator of mitochondrial lipid metabolism. Acts by decreasing protein levels of PISD, a mitochondrial enzyme that converts phosphatidylserine (PtdSer) to phosphatidylethanolamine (PtdEtn), thereby affecting mitochondrial lipid metabolism. It is unclear whether it acts directly by mediating proteolysis of PISD or by mediating proteolysis of another lipid metabolism protein. Acts as a tumor suppressor that has the ability to inhibit proliferation of multiple types of breast cancer cells: probably by promoting decreased levels of PISD, thereby affecting mitochondrial lipid metabolism. In Homo sapiens (Human), this protein is Serine beta-lactamase-like protein LACTB, mitochondrial.